Consider the following 694-residue polypeptide: Methionine--tRNA ligase (694 aa).

The 'HIGH' region motif lies at 12–22 (PYANGPLHLGH). Zn(2+) is bound by residues cysteine 143, cysteine 146, cysteine 156, and cysteine 159. A 'KMSKS' region motif is present at residues 330–334 (KMSKS). Residue lysine 333 coordinates ATP. A compositionally biased stretch (low complexity) spans 550–575 (LAAPAAPATTSKAAPAKPDTKPAAAA). Positions 550-580 (LAAPAAPATTSKAAPAKPDTKPAAAANPQSP) are disordered. The tRNA-binding domain occupies 591 to 694 (DFAKLDLRIG…SGAQPGMPVR (104 aa)).

Belongs to the class-I aminoacyl-tRNA synthetase family. MetG type 1 subfamily. As to quaternary structure, homodimer. It depends on Zn(2+) as a cofactor.

Its subcellular location is the cytoplasm. The catalysed reaction is tRNA(Met) + L-methionine + ATP = L-methionyl-tRNA(Met) + AMP + diphosphate. In terms of biological role, is required not only for elongation of protein synthesis but also for the initiation of all mRNA translation through initiator tRNA(fMet) aminoacylation. The chain is Methionine--tRNA ligase from Xanthomonas oryzae pv. oryzae (strain MAFF 311018).